The sequence spans 387 residues: uncharacterized protein (387 aa).

Residues 5–25 (FVLFSFPFLLLSSMLIFYQTT) traverse the membrane as a helical segment.

Belongs to the LicD transferase family.

It localises to the membrane. This is an uncharacterized protein from Caenorhabditis elegans.